Reading from the N-terminus, the 106-residue chain is Protein translocase subunit SecE (106 aa).

Transmembrane regions (helical) follow at residues 20 to 40 and 75 to 95; these read LPIR…LAAI and IVIG…SIIV.

Belongs to the SecE/SEC61-gamma family. In terms of assembly, component of the Sec protein translocase complex. Heterotrimer consisting of SecY, SecE and SecG subunits. The heterotrimers can form oligomers, although 1 heterotrimer is thought to be able to translocate proteins. Interacts with the ribosome. Interacts with SecDF, and other proteins may be involved. Interacts with SecA.

The protein resides in the cell inner membrane. Essential subunit of the Sec protein translocation channel SecYEG. Clamps together the 2 halves of SecY. May contact the channel plug during translocation. The protein is Protein translocase subunit SecE of Haemophilus influenzae (strain ATCC 51907 / DSM 11121 / KW20 / Rd).